A 262-amino-acid polypeptide reads, in one-letter code: Adenosine deaminase RL5 (262 aa).

Residues N36, Y40, M68, H73, C75, N114, C118, H135, C172, C175, C234, and C237 each contribute to the Cu cation site.

This sequence belongs to the purine nucleoside phosphorylase YfiH/LACC1 family. Homodimer. Cu cation serves as cofactor.

It carries out the reaction adenosine + phosphate = alpha-D-ribose 1-phosphate + adenine. The enzyme catalyses S-methyl-5'-thioadenosine + phosphate = 5-(methylsulfanyl)-alpha-D-ribose 1-phosphate + adenine. It catalyses the reaction inosine + phosphate = alpha-D-ribose 1-phosphate + hypoxanthine. The catalysed reaction is adenosine + H2O + H(+) = inosine + NH4(+). Its function is as follows. Purine nucleoside enzyme that catalyzes the phosphorolysis of adenosine and inosine nucleosides, yielding D-ribose 1-phosphate and the respective free bases, adenine and hypoxanthine. Also catalyzes the phosphorolysis of S-methyl-5'-thioadenosine into adenine and S-methyl-5-thio-alpha-D-ribose 1-phosphate. Also has adenosine deaminase activity. Also acts as a multicopper oxidase able to oxidize a wide variety of polyphenols and related compounds in vitro. Displays substrate preference as follows: syringaldazine &gt; 2,6-dimethoxyphenol &gt; veratryl alcohol &gt; guaiacol &gt; tetramethylbenzidine &gt; 4-methoxybenzyl alcohol &gt; 2,2'-azino-bis(3-ethylbenzthiazoline-6-sulfonic acid) (ABTS) &gt;&gt; phenol red &gt; 1-hydroxybenzotriazole. Cannot use 3,4-dimetoxybenzyl alcohol and violuric acid as substrates. As this enzyme is derived from a rumen microbial community, it may have a role in the digestion of complex plant materials such as ryegrass lignin. This is Adenosine deaminase RL5 from Unknown prokaryotic organism.